The sequence spans 618 residues: Methylmalonyl-CoA mutase small subunit (618 aa).

It belongs to the methylmalonyl-CoA mutase family. In terms of assembly, heterodimer of an alpha and a beta chain. Adenosylcob(III)alamin is required as a cofactor.

It catalyses the reaction (R)-methylmalonyl-CoA = succinyl-CoA. It participates in metabolic intermediate metabolism; propanoyl-CoA degradation; succinyl-CoA from propanoyl-CoA: step 3/3. In terms of biological role, catalyzes the isomerization of succinyl-CoA to methylmalonyl-CoA during synthesis of propionate from tricarboxylic acid-cycle intermediates. This Porphyromonas gingivalis (strain ATCC BAA-308 / W83) protein is Methylmalonyl-CoA mutase small subunit (mutA).